Here is a 375-residue protein sequence, read N- to C-terminus: Alcohol dehydrogenase class-3 chain L (375 aa).

A1 is modified (N-acetylalanine). Residues C46, H68, C98, C101, C104, C112, and C175 each contribute to the Zn(2+) site.

The protein belongs to the zinc-containing alcohol dehydrogenase family. Class-III subfamily. As to quaternary structure, homodimer or heterodimer with H chain. It depends on Zn(2+) as a cofactor.

It is found in the cytoplasm. The catalysed reaction is a primary alcohol + NAD(+) = an aldehyde + NADH + H(+). It carries out the reaction a secondary alcohol + NAD(+) = a ketone + NADH + H(+). It catalyses the reaction S-(hydroxymethyl)glutathione + NADP(+) = S-formylglutathione + NADPH + H(+). The enzyme catalyses S-(hydroxymethyl)glutathione + NAD(+) = S-formylglutathione + NADH + H(+). Its function is as follows. Class-III ADH is remarkably ineffective in oxidizing ethanol, but it readily catalyzes the oxidation of long-chain primary alcohols and the oxidation of S-(hydroxymethyl) glutathione. This Gadus morhua (Atlantic cod) protein is Alcohol dehydrogenase class-3 chain L.